A 533-amino-acid polypeptide reads, in one-letter code: Adenylate kinase 7 (533 aa).

The interval proline 177–glutamate 426 is adenylate kinase. Residue alanine 187 to serine 192 coordinates ATP. An NMP region spans residues glutamine 207–leucine 265. AMP is bound by residues glutamate 242–leucine 265, glycine 292–lysine 295, and glutamine 299. The tract at residues asparagine 347–histidine 357 is LID. Arginine 365 is an AMP binding site. Position 397 (glycine 397) interacts with ATP. The stretch at arginine 419–serine 487 forms a coiled coil. The DPY-30 stretch occupies residues proline 489–glutamine 533.

The protein in the central section; belongs to the adenylate kinase family. In the C-terminal section; belongs to the dpy-30 family.

It localises to the cytoplasm. Its subcellular location is the cytosol. The protein localises to the cell projection. It is found in the cilium. The protein resides in the flagellum. The enzyme catalyses AMP + ATP = 2 ADP. It carries out the reaction a 2'-deoxyribonucleoside 5'-diphosphate + ATP = a 2'-deoxyribonucleoside 5'-triphosphate + ADP. It catalyses the reaction a ribonucleoside 5'-diphosphate + ATP = a ribonucleoside 5'-triphosphate + ADP. Functionally, nucleoside monophosphate (NMP) kinase that catalyzes the reversible transfer of the terminal phosphate group between nucleoside triphosphates and monophosphates. Has highest activity toward AMP, and weaker activity toward dAMP, CMP and dCMP. Also displays broad nucleoside diphosphate kinase activity. Involved in maintaining ciliary structure and function. This is Adenylate kinase 7 (AK7) from Macaca fascicularis (Crab-eating macaque).